The chain runs to 301 residues: HTH-type transcriptional activator NagR (301 aa).

Residues 6 to 63 (IDLNLLVVFNQLLLDRSVSTAGEKLGLTQPAVSNSLKRLRAALKDDLFLRTSKGMEPT) enclose the HTH lysR-type domain. A DNA-binding region (H-T-H motif) is located at residues 23–42 (VSTAGEKLGLTQPAVSNSLK).

It belongs to the LysR transcriptional regulatory family.

Functionally, may regulate the expression of the naphthalene (nagA-F) and salicylate (nagG-M) metabolism genes. The chain is HTH-type transcriptional activator NagR from Ralstonia sp.